The primary structure comprises 365 residues: 7-methylxanthine methyltransferase PCS1 (365 aa).

Y19 serves as a coordination point for S-adenosyl-L-homocysteine. T26 contacts caffeine. Positions 62, 67, 99, 100, 134, and 135 each coordinate S-adenosyl-L-homocysteine. 3 residues coordinate caffeine: Y152, H155, and W156. Mg(2+) is bound at residue N173. H221 is a caffeine binding site. Mg(2+) contacts are provided by D259, F261, and N262. F317 is a caffeine binding site.

It belongs to the methyltransferase superfamily. Type-7 methyltransferase family. Mg(2+) is required as a cofactor.

It carries out the reaction 1,7-dimethylxanthine + S-adenosyl-L-methionine = caffeine + S-adenosyl-L-homocysteine + H(+). The enzyme catalyses 7-methylxanthine + S-adenosyl-L-methionine = theobromine + S-adenosyl-L-homocysteine + H(+). It participates in alkaloid biosynthesis. Involved in the biosynthesis of caffeine. Catalyzes the conversion of 7-methylxanthine (7mX) to theobromine, and, to some extent, the conversion of paraxanthine to caffeine, but seems not able to convert theobromine to caffeine. This chain is 7-methylxanthine methyltransferase PCS1, found in Camellia ptilophylla (Cocoa tea).